The following is a 281-amino-acid chain: Undecaprenyl-diphosphatase (281 aa).

A run of 8 helical transmembrane segments spans residues 4 to 24, 45 to 65, 89 to 109, 113 to 133, 152 to 172, 190 to 210, 225 to 245, and 257 to 277; these read IEILKSIFFGIVEGITEWLPI, AFMSMFNVVIQLGAILAVMVI, WLKVLIATLPLLGVFKFDDWF, FHNMVSVALMLIIYGVAFIYL, LPYTTAFYIGLFQVLALLPGT, SVVTEFTFYLGIPVMFGASAL, GQLFLLLVAMGVAFAVSMVAI, and FTLFGKYRIVLGSVLLLYSFV.

The protein belongs to the UppP family.

It is found in the cell membrane. It catalyses the reaction di-trans,octa-cis-undecaprenyl diphosphate + H2O = di-trans,octa-cis-undecaprenyl phosphate + phosphate + H(+). In terms of biological role, catalyzes the dephosphorylation of undecaprenyl diphosphate (UPP). Confers resistance to bacitracin. This is Undecaprenyl-diphosphatase from Streptococcus pneumoniae (strain Hungary19A-6).